The primary structure comprises 1495 residues: Nuclear pore complex protein NUP160 (1495 aa).

As to quaternary structure, part of the nuclear pore complex (NPC). The NPC has an eight-fold symmetrical structure comprising a central transport channel and two rings, the cytoplasmic and nuclear rings, to which eight filaments are attached. The cytoplasmic filaments have loose ends, while the nuclear filaments are joined in a distal ring, forming a nuclear basket. NPCs are highly dynamic in configuration and composition, and can be devided in 3 subcomplexes, the NUP62 subcomplex, the NUP107-160 subcomplex and the NUP93 subcomplex, containing approximately 30 different nucleoporin proteins. In terms of tissue distribution, expressed in roots, stems, anthers, siliques and vascular tissues of cotyledons, leaves and hypocotyls.

The protein localises to the nucleus membrane. The protein resides in the nucleus. It localises to the nuclear pore complex. Its function is as follows. Contributes to the transfer of mature mRNA from the nucleus to the cytosol. Required for both R gene-mediated and basal disease resistance. RNA export seems to play a critical role in stress responses and regulation of plant growth and development. Required for proper expression of factors associated with auxin signaling. The protein is Nuclear pore complex protein NUP160 of Arabidopsis thaliana (Mouse-ear cress).